Here is a 228-residue protein sequence, read N- to C-terminus: Probable C4-dicarboxylate response regulator DctR (228 aa).

In terms of domain architecture, Response regulatory spans 7-123 (TVLLIEDDPM…RMKQALEQYR (117 aa)). Residue Asp58 is modified to 4-aspartylphosphate. The H-T-H motif DNA-binding region spans 180–199 (AEEVADGVGIARVTARRYLE).

Phosphorylated by DctS.

Its subcellular location is the cytoplasm. Its function is as follows. Member of the two-component regulatory system DctS/DctR. Essential for expression of DctP. The sequence is that of Probable C4-dicarboxylate response regulator DctR (dctR) from Priestia megaterium (Bacillus megaterium).